Reading from the N-terminus, the 274-residue chain is Large ribosomal subunit protein uL2 (274 aa).

Disordered regions lie at residues 21–59 (KVGLSKDEPEKSLTSGKKSSGGRNNHGRITTRHRGGGHK) and 224–274 (AMNP…QLKG). Low complexity predominate over residues 32-42 (SLTSGKKSSGG). A compositionally biased stretch (basic residues) spans 45–59 (NHGRITTRHRGGGHK). Residues 263–274 (KSSDKYIKQLKG) show a composition bias toward basic and acidic residues.

The protein belongs to the universal ribosomal protein uL2 family. In terms of assembly, part of the 50S ribosomal subunit. Forms a bridge to the 30S subunit in the 70S ribosome.

In terms of biological role, one of the primary rRNA binding proteins. Required for association of the 30S and 50S subunits to form the 70S ribosome, for tRNA binding and peptide bond formation. It has been suggested to have peptidyltransferase activity; this is somewhat controversial. Makes several contacts with the 16S rRNA in the 70S ribosome. This chain is Large ribosomal subunit protein uL2, found in Wolbachia pipientis wMel.